A 235-amino-acid polypeptide reads, in one-letter code: Probable septum site-determining protein MinC (235 aa).

Residues Lys104–Pro125 are disordered. The segment covering Pro110–Pro119 has biased composition (pro residues).

This sequence belongs to the MinC family. In terms of assembly, interacts with MinD and FtsZ.

Cell division inhibitor that blocks the formation of polar Z ring septums. Rapidly oscillates between the poles of the cell to destabilize FtsZ filaments that have formed before they mature into polar Z rings. Prevents FtsZ polymerization. In Salmonella agona (strain SL483), this protein is Probable septum site-determining protein MinC.